The following is a 498-amino-acid chain: GTPase Der (498 aa).

EngA-type G domains are found at residues 3-167 (PVVA…FDDL) and 210-383 (IKLA…KSAT). GTP-binding positions include 9–16 (GRPNVGKS), 57–61 (DTGGI), 119–122 (NKID), 216–223 (GRPNVGKS), 263–267 (DTAGV), and 328–331 (NKWD). The 85-residue stretch at 384-468 (TRVGTSVLTR…PIRINFQNSE (85 aa)) folds into the KH-like domain.

Belongs to the TRAFAC class TrmE-Era-EngA-EngB-Septin-like GTPase superfamily. EngA (Der) GTPase family. As to quaternary structure, associates with the 50S ribosomal subunit.

GTPase that plays an essential role in the late steps of ribosome biogenesis. This chain is GTPase Der, found in Vibrio parahaemolyticus serotype O3:K6 (strain RIMD 2210633).